Reading from the N-terminus, the 180-residue chain is Napin (180 aa).

A signal peptide spans 1–21; sequence MANKLFLVSATLAFFFLLTNA. 2 propeptides span residues 22-38 and 75-94; these read SIYR…ATNP and PSWT…NPQG.

Belongs to the 2S seed storage albumins family. As to quaternary structure, the mature protein consists of a small and a large chain linked by disulfide bonds. As to expression, cotyledons and the axis.

Functionally, the small, basic, water-soluble napins are one of the two major kinds of storage proteins synthesized in the seed during its maturation. This is Napin (NAP1) from Brassica napus (Rape).